Reading from the N-terminus, the 810-residue chain is DNA ligase (810 aa).

NAD(+)-binding positions include 46–50 (DAEYD), 95–96 (SL), and glutamate 129. The N6-AMP-lysine intermediate role is filled by lysine 131. NAD(+) contacts are provided by arginine 152, glutamate 189, lysine 305, and lysine 329. Zn(2+) is bound by residues cysteine 434, cysteine 437, cysteine 458, and cysteine 464. Residues 528 to 548 (ERRAESGTAEPPKKAAKKKGD) are disordered. A BRCT domain is found at 731 to 810 (AAASTFAGKT…DDWLAMVAQG (80 aa)).

This sequence belongs to the NAD-dependent DNA ligase family. LigA subfamily. It depends on Mg(2+) as a cofactor. Mn(2+) serves as cofactor.

The enzyme catalyses NAD(+) + (deoxyribonucleotide)n-3'-hydroxyl + 5'-phospho-(deoxyribonucleotide)m = (deoxyribonucleotide)n+m + AMP + beta-nicotinamide D-nucleotide.. DNA ligase that catalyzes the formation of phosphodiester linkages between 5'-phosphoryl and 3'-hydroxyl groups in double-stranded DNA using NAD as a coenzyme and as the energy source for the reaction. It is essential for DNA replication and repair of damaged DNA. The sequence is that of DNA ligase from Methylobacterium radiotolerans (strain ATCC 27329 / DSM 1819 / JCM 2831 / NBRC 15690 / NCIMB 10815 / 0-1).